We begin with the raw amino-acid sequence, 659 residues long: DNA ligase (659 aa).

NAD(+)-binding positions include 32–36 (DFEYD), 81–82 (SL), and glutamate 111. Lysine 113 acts as the N6-AMP-lysine intermediate in catalysis. NAD(+) is bound by residues arginine 134, glutamate 168, lysine 280, and lysine 304. Cysteine 398, cysteine 401, cysteine 416, and cysteine 421 together coordinate Zn(2+). A BRCT domain is found at 585-655 (ETNSIYFQKR…KELNIPIINE (71 aa)).

Belongs to the NAD-dependent DNA ligase family. LigA subfamily. Requires Mg(2+) as cofactor. The cofactor is Mn(2+).

It catalyses the reaction NAD(+) + (deoxyribonucleotide)n-3'-hydroxyl + 5'-phospho-(deoxyribonucleotide)m = (deoxyribonucleotide)n+m + AMP + beta-nicotinamide D-nucleotide.. DNA ligase that catalyzes the formation of phosphodiester linkages between 5'-phosphoryl and 3'-hydroxyl groups in double-stranded DNA using NAD as a coenzyme and as the energy source for the reaction. It is essential for DNA replication and repair of damaged DNA. In Mycoplasma genitalium (strain ATCC 33530 / DSM 19775 / NCTC 10195 / G37) (Mycoplasmoides genitalium), this protein is DNA ligase.